The chain runs to 146 residues: Hemoglobin subunit beta (146 aa).

N-acetylvaline is present on valine 1. Residues histidine 2 to histidine 146 enclose the Globin domain. Phosphothreonine is present on threonine 12. Serine 44 bears the Phosphoserine mark. Lysine 59 bears the N6-acetyllysine mark. Histidine 63 contributes to the heme b binding site. Residue lysine 82 is modified to N6-acetyllysine. A heme b-binding site is contributed by histidine 92. Residue cysteine 93 is modified to S-nitrosocysteine. Lysine 144 bears the N6-acetyllysine mark.

The protein belongs to the globin family. In terms of assembly, heterotetramer of two alpha chains and two beta chains. Red blood cells.

Its function is as follows. Involved in oxygen transport from the lung to the various peripheral tissues. In Hylobates lar (Lar gibbon), this protein is Hemoglobin subunit beta (HBB).